A 173-amino-acid polypeptide reads, in one-letter code: Skp-like protein (173 aa).

The first 19 residues, 1 to 19 (MKKFLLLSLMSLASSTVFA), serve as a signal peptide directing secretion.

This sequence belongs to the Skp family.

The sequence is that of Skp-like protein from Chlamydia muridarum (strain MoPn / Nigg).